The chain runs to 239 residues: uncharacterized protein (239 aa).

The protein belongs to the initiator RepB protein family.

Mutations in ORF 239 affects the incN plasmid pUC1 E.coli polA-independence but not its autonomous replication ability. This is an uncharacterized protein from Escherichia coli.